The primary structure comprises 49 residues: Defensin Tk-AMP-D2 (49 aa).

4 disulfide bridges follow: Cys3-Cys49, Cys14-Cys34, Cys20-Cys43, and Cys24-Cys45.

Its function is as follows. Plant defense peptide. In Triticum kiharae (Wheat), this protein is Defensin Tk-AMP-D2.